The following is a 376-amino-acid chain: Chaperone protein DnaJ (376 aa).

A J domain is found at 5-70 (DYYETLGVQK…EKRAAYDQYG (66 aa)). Residues 133–211 (GTTKDIKINT…CHGDGRVHKK (79 aa)) form a CR-type zinc finger. Residues Cys146, Cys149, Cys163, Cys166, Cys185, Cys188, Cys199, and Cys202 each coordinate Zn(2+). CXXCXGXG motif repeat units follow at residues 146–153 (CDHCDGSG), 163–170 (CPTCHGHG), 185–192 (CPTCQGSG), and 199–206 (CKHCHGDG).

It belongs to the DnaJ family. As to quaternary structure, homodimer. Requires Zn(2+) as cofactor.

Its subcellular location is the cytoplasm. In terms of biological role, participates actively in the response to hyperosmotic and heat shock by preventing the aggregation of stress-denatured proteins and by disaggregating proteins, also in an autonomous, DnaK-independent fashion. Unfolded proteins bind initially to DnaJ; upon interaction with the DnaJ-bound protein, DnaK hydrolyzes its bound ATP, resulting in the formation of a stable complex. GrpE releases ADP from DnaK; ATP binding to DnaK triggers the release of the substrate protein, thus completing the reaction cycle. Several rounds of ATP-dependent interactions between DnaJ, DnaK and GrpE are required for fully efficient folding. Also involved, together with DnaK and GrpE, in the DNA replication of plasmids through activation of initiation proteins. This chain is Chaperone protein DnaJ, found in Mannheimia succiniciproducens (strain KCTC 0769BP / MBEL55E).